The following is a 541-amino-acid chain: MKLLMTGLLASAAVAAAQEQQVLQAEGSAQQQPAPSIFDETLKQFESGLEEGITHFWSEMKTNFKHYLPLISVPKEHTRRADSEWDHVVRGADVESVWVQGANGEKHREIDGKLQSYDLRVKAVDPAELGIDPGVKQYSGYLDDNETDKHLFYWFFESRNDPKNDPVVLWLNGGPGCSSLTGLFLELGPATIDKNLKIVPNPYSWNSNASVIFLDQPVNVGFSYSGSSVSDTVAAGKDIYALLTLFFKQFPEYATQDFHISGESYAGHYIPVFASEILSHKNTNINLKSVLIGNGLTDPLTQYPQYRPMACGDGGYPAVLDQGTCRSMDNSLERCLSLIETCYSSESAWVCVPAAMYCNSAIIGPYQQTGMNPYDVRSKCEDMSSLCYPQLNTITEWLNQKSVMKALGVEVESYESCNGGINRDFLFHGDWMKPYHRLVPSLLEKIPVLIYAGDADFICNWLGNLAWTNALEWPGHKKFADAKMNDLKIVDNKSKGKKIGQVKSSGNFTFMRIFGAGHMVPLNQPEASLEFFNRWLRGEWR.

The signal sequence occupies residues Met-1–Ala-17. Residues Gln-18 to Lys-122 constitute a propeptide that is removed on maturation. Cystine bridges form between Cys-177/Cys-417, Cys-311/Cys-325, Cys-335/Cys-358, Cys-342/Cys-351, and Cys-380/Cys-387. An N-linked (GlcNAc...) asparagine glycan is attached at Asn-208. The active site involves Ser-264. Asp-456 is a catalytic residue. Asn-507 carries N-linked (GlcNAc...) asparagine glycosylation. Residue His-518 is part of the active site.

Belongs to the peptidase S10 family.

The protein localises to the vacuole. The catalysed reaction is Release of a C-terminal amino acid with broad specificity.. Its function is as follows. Vacuolar carboxypeptidase involved in degradation of small peptides. Digests preferentially peptides containing an aliphatic or hydrophobic residue in P1' position, as well as methionine, leucine or phenylalanine in P1 position of ester substrate. This chain is Carboxypeptidase Y homolog A (CPYA), found in Arthroderma otae (strain ATCC MYA-4605 / CBS 113480) (Microsporum canis).